The following is a 510-amino-acid chain: tRNA-2-methylthio-N(6)-dimethylallyladenosine synthase (510 aa).

Residues 19 to 144 form the MTTase N-terminal domain; it reads RTYQVRTFGC…LPVLLERARH (126 aa). [4Fe-4S] cluster-binding residues include C28, C73, C107, C181, C185, and C188. A Radical SAM core domain is found at 167 to 397; the sequence is RESPYAAWVS…TALQDRITYE (231 aa). The TRAM domain maps to 400-470; the sequence is QAQTGRTLEV…PHYLEADDVS (71 aa). Residues 482–492 are compositionally biased toward basic and acidic residues; the sequence is AWEARQARPEP. The disordered stretch occupies residues 482–510; the sequence is AWEARQARPEPESTGPRPVGLGLPTLRRA.

This sequence belongs to the methylthiotransferase family. MiaB subfamily. Monomer. Requires [4Fe-4S] cluster as cofactor.

The protein resides in the cytoplasm. The catalysed reaction is N(6)-dimethylallyladenosine(37) in tRNA + (sulfur carrier)-SH + AH2 + 2 S-adenosyl-L-methionine = 2-methylsulfanyl-N(6)-dimethylallyladenosine(37) in tRNA + (sulfur carrier)-H + 5'-deoxyadenosine + L-methionine + A + S-adenosyl-L-homocysteine + 2 H(+). Functionally, catalyzes the methylthiolation of N6-(dimethylallyl)adenosine (i(6)A), leading to the formation of 2-methylthio-N6-(dimethylallyl)adenosine (ms(2)i(6)A) at position 37 in tRNAs that read codons beginning with uridine. The chain is tRNA-2-methylthio-N(6)-dimethylallyladenosine synthase from Kineococcus radiotolerans (strain ATCC BAA-149 / DSM 14245 / SRS30216).